The sequence spans 492 residues: Catalase isozyme 2 (492 aa).

Residues H65 and N138 contribute to the active site. Y348 contacts heme.

Belongs to the catalase family. Homotetramer. The cofactor is heme.

The protein localises to the peroxisome. The catalysed reaction is 2 H2O2 = O2 + 2 H2O. Functionally, occurs in almost all aerobically respiring organisms and serves to protect cells from the toxic effects of hydrogen peroxide. The protein is Catalase isozyme 2 (CAT2) of Solanum lycopersicum (Tomato).